A 543-amino-acid polypeptide reads, in one-letter code: Mannuronan C5-epimerase (543 aa).

The N-terminal stretch at 1 to 35 (MPDISLSIPRRRLPRLRPLAAAVLGAVLLHGQAWA) is a signal peptide. 7 PbH1 repeats span residues 243–270 (GAEVYLSNSTFTSFGYNASKAYGISISQ), 283–304 (RPKGWVIDSTIVDSWYGFYCYE), 305–327 (ADDLVVKGNTYRDNIVYGIDPHD), 329–352 (SHRLIIADNTVHGTRKKHGIIVSR), 354–376 (VNDSFIFNNRSYENKLSGIVLDR), 378–400 (SEGNLVAYNEVYRNHSDGITLYE), and 401–423 (SGDNLLWGNQVLANRRHGIRVRN). Histidine 326 acts as the Proton acceptor in catalysis.

It belongs to the D-mannuronate C5-epimerase family.

It localises to the periplasm. The enzyme catalyses [(1-&gt;4)-beta-D-mannuronosyl](n) = [alginate](n). Its pathway is glycan biosynthesis; alginate biosynthesis. With respect to regulation, inhibited by the presence of acetyl groups on the substrate. Catalyzes the epimerization of beta-D-mannuronate to alpha-L-guluronate during the synthesis of the linear polysaccharide alginate. In addition, is part of a periplasmic protein complex that protects alginate from degradation by AlgL by channeling the newly formed alginate polymer through a scaffold that transfers the alginate polymer through the periplasmic space to the outer membrane secretin AlgE. The protein is Mannuronan C5-epimerase of Pseudomonas aeruginosa (strain ATCC 15692 / DSM 22644 / CIP 104116 / JCM 14847 / LMG 12228 / 1C / PRS 101 / PAO1).